The following is a 178-amino-acid chain: Interleukin-10 (178 aa).

The signal sequence occupies residues 1-18 (MHSSALLCCLVFLTGVRA). Intrachain disulfides connect Cys-30–Cys-126 and Cys-80–Cys-132. Asn-134 carries an N-linked (GlcNAc...) asparagine glycan.

Belongs to the IL-10 family. As to quaternary structure, homodimer. Interacts with IL10RA and IL10RB.

The protein resides in the secreted. Its function is as follows. Major immune regulatory cytokine that acts on many cells of the immune system where it has profound anti-inflammatory functions, limiting excessive tissue disruption caused by inflammation. Mechanistically, IL10 binds to its heterotetrameric receptor comprising IL10RA and IL10RB leading to JAK1 and STAT2-mediated phosphorylation of STAT3. In turn, STAT3 translocates to the nucleus where it drives expression of anti-inflammatory mediators. Targets antigen-presenting cells (APCs) such as macrophages and monocytes and inhibits their release of pro-inflammatory cytokines including granulocyte-macrophage colony-stimulating factor /GM-CSF, granulocyte colony-stimulating factor/G-CSF, IL-1 alpha, IL-1 beta, IL-6, IL-8 and TNF-alpha. Also interferes with antigen presentation by reducing the expression of MHC-class II and co-stimulatory molecules, thereby inhibiting their ability to induce T cell activation. In addition, controls the inflammatory response of macrophages by reprogramming essential metabolic pathways including mTOR signaling. The polypeptide is Interleukin-10 (IL10) (Saimiri sciureus (Common squirrel monkey)).